The primary structure comprises 98 residues: Putative defensin-like protein 233 (98 aa).

A signal peptide spans 1–28 (MGMWCTTLFMVSCVSICLILSHVQEVEA). Intrachain disulfides connect Cys-35-Cys-96, Cys-45-Cys-70, Cys-53-Cys-86, and Cys-68-Cys-88.

Belongs to the DEFL family. As to expression, expressed at least in stem, root, rosette leaves and flower buds.

The protein resides in the secreted. This Arabidopsis thaliana (Mouse-ear cress) protein is Putative defensin-like protein 233 (SCRL22).